Consider the following 533-residue polypeptide: Probable protein kinase UbiB (533 aa).

Residues 24 to 44 (LILELPMLPWWLRLLGAALPW) form a helical membrane-spanning segment. Positions 126–494 (RFEREPLASA…WKSSRHDWLG (369 aa)) constitute a Protein kinase domain. Residues 132 to 140 (LASASVAQV) and lysine 154 each bind ATP. The active-site Proton acceptor is aspartate 289. Residues 510–530 (LGQQLEAWPAWVMLAGGVFLI) traverse the membrane as a helical segment.

The protein belongs to the ABC1 family. UbiB subfamily.

Its subcellular location is the cell inner membrane. It participates in cofactor biosynthesis; ubiquinone biosynthesis [regulation]. Functionally, is probably a protein kinase regulator of UbiI activity which is involved in aerobic coenzyme Q (ubiquinone) biosynthesis. The polypeptide is Probable protein kinase UbiB (Pseudomonas paraeruginosa (strain DSM 24068 / PA7) (Pseudomonas aeruginosa (strain PA7))).